A 137-amino-acid polypeptide reads, in one-letter code: Ribosome-binding factor A (137 aa).

Residues 112-137 (KKDEVKEDESHEDESTDHTEETNEEP) form a disordered region. The span at 127 to 137 (TDHTEETNEEP) shows a compositional bias: basic and acidic residues.

The protein belongs to the RbfA family. In terms of assembly, monomer. Binds 30S ribosomal subunits, but not 50S ribosomal subunits or 70S ribosomes.

It localises to the cytoplasm. One of several proteins that assist in the late maturation steps of the functional core of the 30S ribosomal subunit. Associates with free 30S ribosomal subunits (but not with 30S subunits that are part of 70S ribosomes or polysomes). Required for efficient processing of 16S rRNA. May interact with the 5'-terminal helix region of 16S rRNA. This Coprothermobacter proteolyticus (strain ATCC 35245 / DSM 5265 / OCM 4 / BT) protein is Ribosome-binding factor A.